The primary structure comprises 215 residues: Large ribosomal subunit protein uL3 (215 aa).

Positions methionine 134–methionine 166 are disordered.

The protein belongs to the universal ribosomal protein uL3 family. As to quaternary structure, part of the 50S ribosomal subunit. Forms a cluster with proteins L14 and L19.

Its function is as follows. One of the primary rRNA binding proteins, it binds directly near the 3'-end of the 23S rRNA, where it nucleates assembly of the 50S subunit. This Gloeobacter violaceus (strain ATCC 29082 / PCC 7421) protein is Large ribosomal subunit protein uL3.